The chain runs to 455 residues: Ribulose bisphosphate carboxylase large chain (455 aa).

An N6,N6,N6-trimethyllysine modification is found at lysine 5. Residues asparagine 114 and threonine 164 each contribute to the substrate site. Lysine 166 serves as the catalytic Proton acceptor. Residue lysine 168 coordinates substrate. Residues lysine 192, aspartate 194, and glutamate 195 each coordinate Mg(2+). An N6-carboxylysine modification is found at lysine 192. Histidine 285 serves as the catalytic Proton acceptor. Substrate contacts are provided by arginine 286, histidine 318, and serine 370.

The protein belongs to the RuBisCO large chain family. Type I subfamily. In terms of assembly, heterohexadecamer of 8 large chains and 8 small chains; disulfide-linked. The disulfide link is formed within the large subunit homodimers. Requires Mg(2+) as cofactor. Post-translationally, the disulfide bond which can form in the large chain dimeric partners within the hexadecamer appears to be associated with oxidative stress and protein turnover.

The protein localises to the plastid. It is found in the chloroplast. The enzyme catalyses 2 (2R)-3-phosphoglycerate + 2 H(+) = D-ribulose 1,5-bisphosphate + CO2 + H2O. The catalysed reaction is D-ribulose 1,5-bisphosphate + O2 = 2-phosphoglycolate + (2R)-3-phosphoglycerate + 2 H(+). In terms of biological role, ruBisCO catalyzes two reactions: the carboxylation of D-ribulose 1,5-bisphosphate, the primary event in carbon dioxide fixation, as well as the oxidative fragmentation of the pentose substrate in the photorespiration process. Both reactions occur simultaneously and in competition at the same active site. In Lupinus microcarpus var. densiflorus (Whitewhorl lupine), this protein is Ribulose bisphosphate carboxylase large chain.